The following is a 294-amino-acid chain: MKQLTLVKTVKGVGIGLHKGEPIEITLEPLEANSGIVFFRSDLNASYKASPENVINTQMATVLGDDRGFISTIEHLMSAINAYGIDNVRIVLNANEAPVMDGSSISFCMMLDEAGVKELDAPKKIMVIKKPIEVRDGNKFVRLTPTKEPRINYTIKFDNAVIGEQSYNFEFSKKNYIENIARARTFGFLKDVQALRSMNLALGGSLENTIVVDENRILNPEGLRFKDEFVRHKILDAIGDLTLLGYRVFGDYTSYAGSHHLNHLLTKEVLKDKDAYEIVSLEKTTQKAYEKVFA.

Residues histidine 75, histidine 232, and aspartate 236 each coordinate Zn(2+). Histidine 259 functions as the Proton donor in the catalytic mechanism.

The protein belongs to the LpxC family. Requires Zn(2+) as cofactor.

It carries out the reaction a UDP-3-O-[(3R)-3-hydroxyacyl]-N-acetyl-alpha-D-glucosamine + H2O = a UDP-3-O-[(3R)-3-hydroxyacyl]-alpha-D-glucosamine + acetate. It functions in the pathway glycolipid biosynthesis; lipid IV(A) biosynthesis; lipid IV(A) from (3R)-3-hydroxytetradecanoyl-[acyl-carrier-protein] and UDP-N-acetyl-alpha-D-glucosamine: step 2/6. Functionally, catalyzes the hydrolysis of UDP-3-O-myristoyl-N-acetylglucosamine to form UDP-3-O-myristoylglucosamine and acetate, the committed step in lipid A biosynthesis. The sequence is that of UDP-3-O-acyl-N-acetylglucosamine deacetylase from Campylobacter jejuni subsp. doylei (strain ATCC BAA-1458 / RM4099 / 269.97).